The following is a 102-amino-acid chain: NADH-quinone oxidoreductase subunit K (102 aa).

The next 3 membrane-spanning stretches (helical) occupy residues 6–26 (MEHG…GLLI), 30–50 (LLYI…AFVV), and 65–85 (ILVI…LLLL).

Belongs to the complex I subunit 4L family. NDH-1 is composed of 13 different subunits. Subunits NuoA, H, J, K, L, M, N constitute the membrane sector of the complex.

The protein resides in the cell inner membrane. It carries out the reaction a quinone + NADH + 5 H(+)(in) = a quinol + NAD(+) + 4 H(+)(out). Functionally, NDH-1 shuttles electrons from NADH, via FMN and iron-sulfur (Fe-S) centers, to quinones in the respiratory chain. The immediate electron acceptor for the enzyme in this species is believed to be ubiquinone. Couples the redox reaction to proton translocation (for every two electrons transferred, four hydrogen ions are translocated across the cytoplasmic membrane), and thus conserves the redox energy in a proton gradient. The sequence is that of NADH-quinone oxidoreductase subunit K from Shewanella oneidensis (strain ATCC 700550 / JCM 31522 / CIP 106686 / LMG 19005 / NCIMB 14063 / MR-1).